Reading from the N-terminus, the 109-residue chain is Anther-specific protein MZm3-3 (109 aa).

The N-terminal stretch at 1-41 (MTATTTTAAGGGKVQPRGLPVALSLLLLLVLAAGLGGGAEA) is a signal peptide. Disulfide bonds link C45/C86, C55/C75, C76/C101, and C88/C108.

The protein belongs to the A9/FIL1 family. Tapetum of anthers.

It is found in the secreted. This is Anther-specific protein MZm3-3 from Zea mays (Maize).